The following is a 209-amino-acid chain: Tumor suppressor candidate gene 1 protein (209 aa).

Disordered regions lie at residues 1–55, 111–157, and 172–209; these read MWRM…DGAR, ALRL…LRAR, and LHLE…GPWL. The span at 14-47 shows a compositional bias: gly residues; that stretch reads CCGGDGAADGRGPGRSGRARGGGSPSGGGGGVGW. Residues 70–114 are a coiled coil; sequence LEAIRARDEWDRQNARLRQENARLRLENRRLKRENRSLFRQALRL. Residues 125 to 149 are compositionally biased toward basic and acidic residues; the sequence is EARRVPEEASTNRRARDSGREDEPG. Ser-150 carries the phosphoserine modification. The stretch at 152–177 forms a coiled coil; that stretch reads RALRARLEKLEAMYRRALLQLHLEQR. Over residues 174 to 188 the composition is skewed to basic and acidic residues; the sequence is LEQRGPRPSGDKEEQ.

As to expression, widely expressed at low level. Expressed at higher level in testis, weakly expressed in muscle, colon, lung and spleen. Not detected in 3 non small cell lung carcinoma (NSCLC) cell lines with homozygous deletion of the 9p region, while it is down-regulated in 3 other tumor cell lines.

The polypeptide is Tumor suppressor candidate gene 1 protein (TUSC1) (Homo sapiens (Human)).